A 340-amino-acid chain; its full sequence is Nuclear hormone receptor family member nhr-197 (340 aa).

The nuclear receptor DNA-binding region spans 1–75 (MNCVVCSGRA…VGMTLAPLND (75 aa)). 2 NR C4-type zinc fingers span residues 3 to 23 (CVVC…CFAC) and 39 to 58 (CKRI…CRAC). An NR LBD domain is found at 98 to 337 (KNDKNYSHFV…KRIMQDLFSN (240 aa)).

Belongs to the nuclear hormone receptor family.

It is found in the nucleus. In terms of biological role, orphan nuclear receptor. This Caenorhabditis elegans protein is Nuclear hormone receptor family member nhr-197 (nhr-197).